A 551-amino-acid chain; its full sequence is Arginine--tRNA ligase (551 aa).

Residues 123 to 133 (ANPTGPLTIGR) carry the 'HIGH' region motif.

The protein belongs to the class-I aminoacyl-tRNA synthetase family. In terms of assembly, monomer.

The protein resides in the cytoplasm. It catalyses the reaction tRNA(Arg) + L-arginine + ATP = L-arginyl-tRNA(Arg) + AMP + diphosphate. This Chlorobium phaeobacteroides (strain DSM 266 / SMG 266 / 2430) protein is Arginine--tRNA ligase.